A 314-amino-acid polypeptide reads, in one-letter code: Acetaldehyde dehydrogenase 1 (314 aa).

11-14 (SGNI) lines the NAD(+) pocket. C129 functions as the Acyl-thioester intermediate in the catalytic mechanism. NAD(+)-binding positions include 160 to 168 (SAGPGTRAN) and N292.

This sequence belongs to the acetaldehyde dehydrogenase family.

The enzyme catalyses acetaldehyde + NAD(+) + CoA = acetyl-CoA + NADH + H(+). In Nocardioides sp. (strain ATCC BAA-499 / JS614), this protein is Acetaldehyde dehydrogenase 1.